The primary structure comprises 295 residues: Small ribosomal subunit biogenesis GTPase RsgA (295 aa).

The CP-type G domain maps to 68–228 (KNLLVKPHVA…VVDTPGFANL (161 aa)). GTP is bound by residues 117–120 (NKMD) and 170–178 (GLSGVGKSS). Positions 250, 255, 257, and 263 each coordinate Zn(2+).

Belongs to the TRAFAC class YlqF/YawG GTPase family. RsgA subfamily. As to quaternary structure, monomer. Associates with 30S ribosomal subunit, binds 16S rRNA. Requires Zn(2+) as cofactor.

It is found in the cytoplasm. In terms of biological role, one of several proteins that assist in the late maturation steps of the functional core of the 30S ribosomal subunit. Helps release RbfA from mature subunits. May play a role in the assembly of ribosomal proteins into the subunit. Circularly permuted GTPase that catalyzes slow GTP hydrolysis, GTPase activity is stimulated by the 30S ribosomal subunit. The sequence is that of Small ribosomal subunit biogenesis GTPase RsgA from Thermotoga neapolitana (strain ATCC 49049 / DSM 4359 / NBRC 107923 / NS-E).